The chain runs to 191 residues: Protein DMP10 (191 aa).

Transmembrane regions (helical) follow at residues 15-35 (FANL…PSFS), 48-68 (LLTI…SFTD), 114-134 (LSFV…ALAV), and 158-178 (LMIK…FAIF).

This sequence belongs to the plant DMP1 protein family. As to expression, restricted to flowers.

The protein localises to the membrane. Its function is as follows. Involved in membrane remodeling. This is Protein DMP10 from Arabidopsis thaliana (Mouse-ear cress).